The sequence spans 321 residues: Isopenicillin N synthase (321 aa).

The interval 1-42 (MPVLMPSADVPTIDISPQLFGTDPTPRRTSRGRSTRPARGSG) is disordered. Residues Arg-87, Tyr-91, and Tyr-188 each coordinate isopenicillin N. Arg-87, Tyr-91, Tyr-188, His-213, and Asp-215 together coordinate N-[(5S)-5-amino-5-carboxypentanoyl]-L-cysteinyl-D-valine. Positions 179–287 (TLSAVSMIRY…RLSLPFFLHA (109 aa)) constitute a Fe2OG dioxygenase domain. Fe(2+) contacts are provided by His-213, Asp-215, and His-269. Arg-278 is a 2-oxoglutarate binding site. Ser-280 serves as a coordination point for isopenicillin N. An N-[(5S)-5-amino-5-carboxypentanoyl]-L-cysteinyl-D-valine-binding site is contributed by Ser-280.

Belongs to the iron/ascorbate-dependent oxidoreductase family. It depends on Fe cation as a cofactor. The cofactor is L-ascorbate.

It catalyses the reaction N-[(5S)-5-amino-5-carboxypentanoyl]-L-cysteinyl-D-valine + O2 = isopenicillin N + 2 H2O. It functions in the pathway antibiotic biosynthesis; penicillin G biosynthesis; penicillin G from L-alpha-aminoadipate and L-cysteine and L-valine: step 2/3. In terms of biological role, removes, in the presence of oxygen, 4 hydrogen atoms from delta-L-(alpha-aminoadipyl)-L-cysteinyl-D-valine (ACV) to form the azetidinone and thiazolidine rings of isopenicillin. This chain is Isopenicillin N synthase (pcbC), found in Streptantibioticus cattleyicolor (Streptomyces cattleya).